Here is a 347-residue protein sequence, read N- to C-terminus: Biotin synthase (347 aa).

In terms of domain architecture, Radical SAM core spans 54 to 273 (NHVETASLLS…IAVARIMMPK (220 aa)). Residues C69, C73, and C76 each coordinate [4Fe-4S] cluster. [2Fe-2S] cluster-binding residues include C113, C144, C204, and R277.

It belongs to the radical SAM superfamily. Biotin synthase family. As to quaternary structure, homodimer. It depends on [4Fe-4S] cluster as a cofactor. [2Fe-2S] cluster is required as a cofactor.

The catalysed reaction is (4R,5S)-dethiobiotin + (sulfur carrier)-SH + 2 reduced [2Fe-2S]-[ferredoxin] + 2 S-adenosyl-L-methionine = (sulfur carrier)-H + biotin + 2 5'-deoxyadenosine + 2 L-methionine + 2 oxidized [2Fe-2S]-[ferredoxin]. Its pathway is cofactor biosynthesis; biotin biosynthesis; biotin from 7,8-diaminononanoate: step 2/2. Catalyzes the conversion of dethiobiotin (DTB) to biotin by the insertion of a sulfur atom into dethiobiotin via a radical-based mechanism. The sequence is that of Biotin synthase from Afipia carboxidovorans (strain ATCC 49405 / DSM 1227 / KCTC 32145 / OM5) (Oligotropha carboxidovorans).